The chain runs to 195 residues: Probable GTP-binding protein EngB (195 aa).

The EngB-type G domain maps to 24–195 (GLKEVALAGR…MIFNAIEKYL (172 aa)). GTP-binding positions include 32–39 (GRSNVGKS), 59–63 (GKTQT), 77–80 (DVPG), 144–147 (TKED), and 176–178 (YTA). 2 residues coordinate Mg(2+): Ser-39 and Thr-61.

The protein belongs to the TRAFAC class TrmE-Era-EngA-EngB-Septin-like GTPase superfamily. EngB GTPase family. Mg(2+) serves as cofactor.

Functionally, necessary for normal cell division and for the maintenance of normal septation. In Macrococcus caseolyticus (strain JCSC5402) (Macrococcoides caseolyticum), this protein is Probable GTP-binding protein EngB.